Here is a 101-residue protein sequence, read N- to C-terminus: Small ribosomal subunit protein uS14A (101 aa).

Disordered regions lie at residues 1-21 and 49-73; these read MAKK…AHHA and QRLP…PRGT. 2 stretches are compositionally biased toward basic and acidic residues: residues 8-21 and 61-70; these read AKNE…AHHA and RNRDAADGRP.

The protein belongs to the universal ribosomal protein uS14 family. As to quaternary structure, part of the 30S ribosomal subunit. Contacts proteins S3 and S10.

Binds 16S rRNA, required for the assembly of 30S particles and may also be responsible for determining the conformation of the 16S rRNA at the A site. This is Small ribosomal subunit protein uS14A from Kineococcus radiotolerans (strain ATCC BAA-149 / DSM 14245 / SRS30216).